The sequence spans 527 residues: Eukaryotic translation initiation factor 2 subunit gamma (527 aa).

Positions 1-83 (MSDLQDQEPS…GLPEQPLNPD (83 aa)) are disordered. Position 60 is a phosphothreonine (threonine 60). The 210-residue stretch at 98-307 (QATINIGTIG…IVKTIPVPPR (210 aa)) folds into the tr-type G domain. The interval 107-114 (GHVAHGKS) is G1. 110-115 (AHGKST) is a binding site for GTP. The tract at residues 135 to 139 (NITIK) is G2. The interval 193–196 (DCPG) is G3. 249–252 (NKVD) lines the GTP pocket. Residues 249–252 (NKVD) form a G4 region. Position 258 is a phosphoserine (serine 258). 284–286 (SAQ) provides a ligand contact to GTP. The segment at 284–286 (SAQ) is G5. The interval 515–527 (ATIKKGTTLEPIA) is interacts with CDC123.

Belongs to the TRAFAC class translation factor GTPase superfamily. Classic translation factor GTPase family. EIF2G subfamily. As to quaternary structure, eukaryotic translation initiation factor 2 eIF2 is a heterotrimeric complex composed of an alpha, a beta and a gamma subunit. The factors eIF-1, eIF-1A, eIF-2, eIF-3, TIF5/eIF-5 and methionyl-tRNAi form a multifactor complex (MFC) that may bind to the 40S ribosome. Interacts (via C-terminus) with CDC123; the interaction is direct. Interacts with GCD1. Interacts with the eIF2B complex subunits GCD6 and GCD7. Interacts with methionyl-initiator methionine tRNA.

It localises to the cytoplasm. The protein resides in the cytosol. It catalyses the reaction GTP + H2O = GDP + phosphate + H(+). Functionally, as a subunit of eukaryotic initiation factor 2 eIF2, involved in the early steps of protein synthesis. In the presence of GTP, eIF-2 forms a ternary complex with initiator tRNA Met-tRNAi and then recruits the 40S ribosomal complex and initiation factors eIF-1, eIF-1A and eIF-3 to form the 43S pre-initiation complex (43S PIC), a step that determines the rate of protein translation. The 43S PIC binds to mRNA and scans downstream to the initiation codon, where it forms a 48S initiation complex by codon-anticodon base pairing. This leads to the displacement of eIF-1 to allow GTPase-activating protein (GAP) eIF-5-mediated hydrolysis of eIF2-bound GTP. Hydrolysis of GTP and release of Pi, which makes GTP hydrolysis irreversible, causes the release of the eIF-2-GDP binary complex from the 40S subunit, an event that is essential for the subsequent joining of the 60S ribosomal subunit to form an elongation-competent 80S ribosome. In order for eIF-2 to recycle and catalyze another round of initiation, the GDP bound to eIF-2 must be exchanged with GTP by way of a reaction catalyzed by GDP-GTP exchange factor (GEF) eIF-2B. The sequence is that of Eukaryotic translation initiation factor 2 subunit gamma (GCD11) from Saccharomyces cerevisiae (strain ATCC 204508 / S288c) (Baker's yeast).